The primary structure comprises 2325 residues: Centriolin (2325 aa).

The segment at M1 to R33 is disordered. A compositionally biased stretch (low complexity) spans P16–R33. LRR repeat units lie at residues K126–L147, K148–C169, N170–K191, and S194–K215. One can recognise an LRRCT domain in the interval N228–R266. Coiled coils occupy residues F267–T343 and L435–V799. S831 is modified (phosphoserine). The stretch at L851–T1101 forms a coiled coil. The interval P1150–P1241 is disordered. Positions S1224–E1235 are enriched in acidic residues. A coiled-coil region spans residues E1317–C2255. S1475 carries the post-translational modification Phosphoserine. Residues M1948 to R2118 are required for centrosome localization. The tract at residues Q1985 to R2325 is sufficient for interaction with HOOK2. Positions V2288–R2325 are disordered. Residues S2290–L2314 show a composition bias toward low complexity. Positions G2315–R2325 are enriched in polar residues.

Interacts with HOOK2. Interacts with EXOC6 and SNAPIN. Associates with the exocyst complex. In terms of tissue distribution, widely expressed with highest levels in testis and trachea.

The protein resides in the cytoplasm. It is found in the cytoskeleton. Its subcellular location is the microtubule organizing center. It localises to the centrosome. The protein localises to the midbody. The protein resides in the midbody ring. Involved in cell cycle progression and cytokinesis. During the late steps of cytokinesis, anchors exocyst and SNARE complexes at the midbody, thereby allowing secretory vesicle-mediated abscission. The sequence is that of Centriolin (CNTRL) from Homo sapiens (Human).